An 81-amino-acid polypeptide reads, in one-letter code: Exodeoxyribonuclease 7 small subunit (81 aa).

This sequence belongs to the XseB family. In terms of assembly, heterooligomer composed of large and small subunits.

It is found in the cytoplasm. It catalyses the reaction Exonucleolytic cleavage in either 5'- to 3'- or 3'- to 5'-direction to yield nucleoside 5'-phosphates.. Its function is as follows. Bidirectionally degrades single-stranded DNA into large acid-insoluble oligonucleotides, which are then degraded further into small acid-soluble oligonucleotides. This is Exodeoxyribonuclease 7 small subunit from Nitratidesulfovibrio vulgaris (strain ATCC 29579 / DSM 644 / CCUG 34227 / NCIMB 8303 / VKM B-1760 / Hildenborough) (Desulfovibrio vulgaris).